The sequence spans 117 residues: Hydrogenase maturation factor HypA (117 aa).

Residue H2 coordinates Ni(2+). Zn(2+) is bound by residues C73, C76, C89, and C92.

The protein belongs to the HypA/HybF family.

Functionally, involved in the maturation of [NiFe] hydrogenases. Required for nickel insertion into the metal center of the hydrogenase. The chain is Hydrogenase maturation factor HypA from Pelodictyon phaeoclathratiforme (strain DSM 5477 / BU-1).